A 286-amino-acid polypeptide reads, in one-letter code: Mycolic acid methyltransferase MmaA1 (286 aa).

S-adenosyl-L-methionine is bound by residues 32-33 (YT), 71-73 (GCG), 93-98 (TLSRNH), and 122-123 (WE). Cys-268 is a catalytic residue.

This sequence belongs to the CFA/CMAS family.

The protein operates within lipid metabolism; mycolic acid biosynthesis. Its function is as follows. Involved in the conversion of a cis-olefin into a trans-olefin with concomitant introduction of an allylic methyl branch at the proximal position of the precursor to both the methoxy and ketomycolic acids. It directly affects the cis- to trans ratio and indirectly affects the keto to methoxy ratio. The sequence is that of Mycolic acid methyltransferase MmaA1 (cmaD) from Mycobacterium bovis (strain ATCC BAA-935 / AF2122/97).